Here is a 101-residue protein sequence, read N- to C-terminus: MSQKIRIKLKSYDHNLVDKSAEKIVRTVKATGAIVSGPIPLPTHKRIFTVNRSTFVNKKSREQFELSSFKRLIDIYSSTAKTVDALMKLELPSGVEVEIKV.

Belongs to the universal ribosomal protein uS10 family. Part of the 30S ribosomal subunit.

Involved in the binding of tRNA to the ribosomes. This is Small ribosomal subunit protein uS10 from Bacteroides fragilis (strain ATCC 25285 / DSM 2151 / CCUG 4856 / JCM 11019 / LMG 10263 / NCTC 9343 / Onslow / VPI 2553 / EN-2).